The chain runs to 149 residues: Arginine repressor (149 aa).

This sequence belongs to the ArgR family.

The protein resides in the cytoplasm. It functions in the pathway amino-acid biosynthesis; L-arginine biosynthesis [regulation]. Its function is as follows. Regulates arginine biosynthesis genes. The polypeptide is Arginine repressor (Bacillus cereus (strain ATCC 10987 / NRS 248)).